Consider the following 307-residue polypeptide: Agmatinase (307 aa).

The Mn(2+) site is built by H128, D151, H153, D155, D232, and D234.

This sequence belongs to the arginase family. Agmatinase subfamily. The cofactor is Mn(2+).

The enzyme catalyses agmatine + H2O = urea + putrescine. It functions in the pathway amine and polyamine biosynthesis; putrescine biosynthesis via agmatine pathway; putrescine from agmatine: step 1/1. Its function is as follows. Catalyzes the formation of putrescine from agmatine. The protein is Agmatinase of Neisseria meningitidis serogroup A / serotype 4A (strain DSM 15465 / Z2491).